Reading from the N-terminus, the 346-residue chain is Phosphoribosylformylglycinamidine cyclo-ligase (346 aa).

This sequence belongs to the AIR synthase family.

It localises to the cytoplasm. The enzyme catalyses 2-formamido-N(1)-(5-O-phospho-beta-D-ribosyl)acetamidine + ATP = 5-amino-1-(5-phospho-beta-D-ribosyl)imidazole + ADP + phosphate + H(+). The protein operates within purine metabolism; IMP biosynthesis via de novo pathway; 5-amino-1-(5-phospho-D-ribosyl)imidazole from N(2)-formyl-N(1)-(5-phospho-D-ribosyl)glycinamide: step 2/2. The sequence is that of Phosphoribosylformylglycinamidine cyclo-ligase from Bacillus cereus (strain G9842).